The sequence spans 439 residues: Xylose isomerase (439 aa).

Catalysis depends on residues H101 and D104. Residues E232, E268, H271, D296, D307, D309, and D339 each coordinate Mg(2+).

The protein belongs to the xylose isomerase family. In terms of assembly, homotetramer. Mg(2+) is required as a cofactor.

It is found in the cytoplasm. It catalyses the reaction alpha-D-xylose = alpha-D-xylulofuranose. This is Xylose isomerase from Yersinia pestis bv. Antiqua (strain Angola).